The chain runs to 868 residues: Leucine--tRNA ligase (868 aa).

The 'HIGH' region signature appears at 42-52; the sequence is PYPSGKLHMGH. The 'KMSKS' region motif lies at 627 to 631; that stretch reads KMSKS. K630 serves as a coordination point for ATP.

Belongs to the class-I aminoacyl-tRNA synthetase family.

The protein resides in the cytoplasm. The catalysed reaction is tRNA(Leu) + L-leucine + ATP = L-leucyl-tRNA(Leu) + AMP + diphosphate. The polypeptide is Leucine--tRNA ligase (Pseudomonas entomophila (strain L48)).